The primary structure comprises 471 residues: Ribulose bisphosphate carboxylase large chain (471 aa).

Residues 1–2 constitute a propeptide that is removed on maturation; it reads MS. Residue proline 3 is modified to N-acetylproline. At lysine 14 the chain carries N6,N6,N6-trimethyllysine. The substrate site is built by asparagine 123 and threonine 173. Lysine 175 serves as the catalytic Proton acceptor. Residue lysine 177 participates in substrate binding. Residues lysine 201, aspartate 203, and glutamate 204 each contribute to the Mg(2+) site. Lysine 201 carries the post-translational modification N6-carboxylysine. Histidine 294 (proton acceptor) is an active-site residue. Arginine 295, histidine 327, and serine 379 together coordinate substrate.

This sequence belongs to the RuBisCO large chain family. Type I subfamily. In terms of assembly, heterohexadecamer of 8 large chains and 8 small chains; disulfide-linked. The disulfide link is formed within the large subunit homodimers. Mg(2+) is required as a cofactor. The disulfide bond which can form in the large chain dimeric partners within the hexadecamer appears to be associated with oxidative stress and protein turnover.

The protein localises to the plastid. It is found in the chloroplast. The catalysed reaction is 2 (2R)-3-phosphoglycerate + 2 H(+) = D-ribulose 1,5-bisphosphate + CO2 + H2O. It carries out the reaction D-ribulose 1,5-bisphosphate + O2 = 2-phosphoglycolate + (2R)-3-phosphoglycerate + 2 H(+). Its function is as follows. RuBisCO catalyzes two reactions: the carboxylation of D-ribulose 1,5-bisphosphate, the primary event in carbon dioxide fixation, as well as the oxidative fragmentation of the pentose substrate in the photorespiration process. Both reactions occur simultaneously and in competition at the same active site. This is Ribulose bisphosphate carboxylase large chain from Drymophloeus subdistichus (Palm tree).